Reading from the N-terminus, the 241-residue chain is Small ribosomal subunit protein uS2 (241 aa).

It belongs to the universal ribosomal protein uS2 family.

The sequence is that of Small ribosomal subunit protein uS2 from Pectobacterium atrosepticum (strain SCRI 1043 / ATCC BAA-672) (Erwinia carotovora subsp. atroseptica).